A 432-amino-acid chain; its full sequence is Solute carrier family 35 member F5 (432 aa).

The signal sequence occupies residues 1 to 33 (MFLPSTTNHSSAPLQKHLCLFCTFWALLFGSHG). S116 is modified (phosphoserine). The next 8 membrane-spanning stretches (helical) occupy residues 152–172 (ISFFFCFVWFLANLSYQEALS), 177–197 (AIVNILSSTSGLFTLILAAVF), 205–225 (FTLSKLLAVILSIGGVVLVNL), 236–256 (TIGSIWSLAGAMLYAVYIVMI), 270–290 (MFFGFVGLFNLLLLWPGFFLL), 304–324 (VVLMCIIINGLIGTVLSEFLW), 329–349 (FLTSSLIGTLALSLTIPLSII), and 361–381 (WLFFAGAIPVFFSFFIVTLLC). Positions 161 to 225 (FLANLSYQEA…SIGGVVLVNL (65 aa)) constitute an EamA domain.

Belongs to the SLC35F solute transporter family.

It is found in the membrane. Its function is as follows. Putative solute transporter. The protein is Solute carrier family 35 member F5 (SLC35F5) of Macaca fascicularis (Crab-eating macaque).